The following is a 237-amino-acid chain: Terpene cyclase spyD (237 aa).

The next 7 membrane-spanning stretches (helical) occupy residues 17–37 (IYNVLVATAGMMWLINYIVTV), 47–67 (AIPLVSLCCNIAWEFTVVLVY), 71–91 (YLLFEIFCAMWLLVNMVIVYG), 109–129 (HLPLIVPLAILGCISGYYALA), 138–158 (IHGGGTFASFVMTVDCLCQLL), 167–187 (SWTMWLTRVLGSYAAIVGEFL), and 206–226 (WCTGMAVTMDILYACIFWYMG).

The protein belongs to the paxB family.

The protein localises to the membrane. The catalysed reaction is (S)-(2E,6E,10E)-epoxygeranylgeranyl-triacetate lactone = sartorypyrone F. It catalyses the reaction (S)-(2E,6E,10E)-epoxygeranylgeranyl-triacetate lactone = sartorypyrone D. It functions in the pathway secondary metabolite biosynthesis; terpenoid biosynthesis. Terpene cyclase; part of the gene cluster that mediates the biosynthesis of meroterpenoids called sartorypyrones. Within the pathway, spyD catalyzes the cyclization of epoxygeranylgeranyl-triacetate lactone. SpyD exhibits promiscuous activity, resulting in the formation of bicyclic sartorypyrone F and monocyclic sartorypyrone D. The biosynthesis of sartorypyrones begins with the production of triacetic acid lactone (TAL) by the NR-PKS spyA using one molecule of acetyl-CoA and two molecules of malonyl-CoA. The prenyltransferase spyF then conjugates geranylgeranyl pyrophosphate (GGPP) to TAL to form geranylgeranyl-triacetate lactone, for which the pathway-specific geranylgeranyl pyrophosphate synthase (GGPS) spyE is required to provide GGPP. Subsequently, geranylgeranyl-triacetate lactone is epoxidized at the terminal olein by the FAD-dependent monooxygenase spyC, followed by cyclization of the terpenoid component catalyzed by the terpene cyclase spyD to produce both the bicyclic sartorypyrone F and the monocyclic sartorypyrone D. Finally, the last step of the biosynthesis involves the acetylation of the meroterpenoids sartorypyrones D and F by the acetyltransferase SpyB to produce sartorypyrones A and G, respectively. The sequence is that of Terpene cyclase spyD from Aspergillus fumigatus (strain ATCC MYA-4609 / CBS 101355 / FGSC A1100 / Af293) (Neosartorya fumigata).